Consider the following 425-residue polypeptide: Serine--tRNA ligase (425 aa).

226-228 serves as a coordination point for L-serine; sequence TSE. ATP contacts are provided by residues 257–259 and Val-273; that span reads RRE. An L-serine-binding site is contributed by Glu-280. An ATP-binding site is contributed by 344-347; that stretch reads ELTS. L-serine is bound at residue Thr-382.

Belongs to the class-II aminoacyl-tRNA synthetase family. Type-1 seryl-tRNA synthetase subfamily. In terms of assembly, homodimer. The tRNA molecule binds across the dimer.

Its subcellular location is the cytoplasm. The enzyme catalyses tRNA(Ser) + L-serine + ATP = L-seryl-tRNA(Ser) + AMP + diphosphate + H(+). It catalyses the reaction tRNA(Sec) + L-serine + ATP = L-seryl-tRNA(Sec) + AMP + diphosphate + H(+). The protein operates within aminoacyl-tRNA biosynthesis; selenocysteinyl-tRNA(Sec) biosynthesis; L-seryl-tRNA(Sec) from L-serine and tRNA(Sec): step 1/1. Functionally, catalyzes the attachment of serine to tRNA(Ser). Is also able to aminoacylate tRNA(Sec) with serine, to form the misacylated tRNA L-seryl-tRNA(Sec), which will be further converted into selenocysteinyl-tRNA(Sec). The sequence is that of Serine--tRNA ligase from Mycobacterium avium (strain 104).